A 494-amino-acid chain; its full sequence is NAD(P)H-quinone oxidoreductase subunit 2 B, chloroplastic (494 aa).

14 consecutive transmembrane segments (helical) span residues 13–33, 39–59, 81–101, 107–127, 131–151, 166–186, 211–231, 243–263, 277–297, 305–325, 336–356, 378–398, 411–433, and 468–488; these read SILP…IDLI, TPWL…ILLF, IFRL…IDYI, ALTE…FLCC, LVTI…LSGY, LLMG…LYGL, MFIS…LVPF, PTPV…ALAT, WHLL…FIAV, MLAY…IAAE, YMLI…LFGL, LSLV…GFFG, LYFL…LKII, and MIIC…IIAI.

The protein belongs to the complex I subunit 2 family. NDH is composed of at least 16 different subunits, 5 of which are encoded in the nucleus.

It localises to the plastid. It is found in the chloroplast thylakoid membrane. It catalyses the reaction a plastoquinone + NADH + (n+1) H(+)(in) = a plastoquinol + NAD(+) + n H(+)(out). It carries out the reaction a plastoquinone + NADPH + (n+1) H(+)(in) = a plastoquinol + NADP(+) + n H(+)(out). Functionally, NDH shuttles electrons from NAD(P)H:plastoquinone, via FMN and iron-sulfur (Fe-S) centers, to quinones in the photosynthetic chain and possibly in a chloroplast respiratory chain. The immediate electron acceptor for the enzyme in this species is believed to be plastoquinone. Couples the redox reaction to proton translocation, and thus conserves the redox energy in a proton gradient. The sequence is that of NAD(P)H-quinone oxidoreductase subunit 2 B, chloroplastic from Angiopteris evecta (Mule's foot fern).